We begin with the raw amino-acid sequence, 387 residues long: Oxidase FUB9 (387 aa).

The disordered stretch occupies residues 1-20; sequence MSRTNLPIQPAKMSDATSSK. In terms of domain architecture, FMN hydroxy acid dehydrogenase spans 18–379; sequence SSKPQIFSIQ…TPAHLSILNA (362 aa). A 2-oxocarboxylate is bound at residue tyrosine 44. FMN contacts are provided by serine 126, glutamine 150, and threonine 178. Residue arginine 187 participates in a 2-oxocarboxylate binding. Position 250 (lysine 250) interacts with FMN. Residue histidine 274 is the Proton acceptor of the active site. Arginine 277 is a binding site for a 2-oxocarboxylate. FMN is bound by residues 305–309 and 328–329; these read DGGFR and GR.

It belongs to the FMN-dependent alpha-hydroxy acid dehydrogenase family. Requires FMN as cofactor.

The protein operates within mycotoxin biosynthesis. Oxidase; part of the gene cluster that mediates the biosynthesis of fusaric acid, a mycotoxin with low to moderate toxicity to animals and humans, but with high phytotoxic properties. L-aspartate is suggested as fusaric acid amino acid precursor that is activated and further processed to O-acetyl-L-homoserine by cluster enzymes aspartate kinase FUB3 and homoserine O-acetyltransferase FUB5, as well as enzymes of the primary metabolism. The polyketide synthase (PKS) FUB1 generates the triketide trans-2-hexenal which is presumptively released by the hydrolase FUB4 and linked to the NRPS-bound amino acid precursor by NAD(P)-dependent dehydrogenase FUB6. FUB1, FUB4, and the non-canonical NRPS Fub8 may form an enzyme complex. Further processing of the NRPS-bound intermediate might be carried out by FUB6 and the sulfhydrylase FUB7, enabling a spontaneous electrocyclization to close the carbon backbone of fusaric acid. Dihydrofusaric acid is likely to be released via reduction by the thioester reductase (TR) domain of FUB8 whereupon the final oxidation to fusaric acid may (also) be performed by the FMN-dependent dehydrogenase FUB9. The sequence is that of Oxidase FUB9 from Fusarium oxysporum f. sp. lycopersici (strain 4287 / CBS 123668 / FGSC 9935 / NRRL 34936) (Fusarium vascular wilt of tomato).